Consider the following 291-residue polypeptide: Polyamine aminopropyltransferase (291 aa).

A PABS domain is found at 5 to 245 (PGPISLIEPL…YAVNYILGSL (241 aa)). Gln-36 contributes to the S-methyl-5'-thioadenosine binding site. Spermidine contacts are provided by His-67 and Glu-91. Residues Asp-111 and 143 to 144 (DG) contribute to the S-methyl-5'-thioadenosine site. The Proton acceptor role is filled by Asp-164.

The protein belongs to the spermidine/spermine synthase family. In terms of assembly, homodimer or homotetramer.

Its subcellular location is the cytoplasm. The enzyme catalyses S-adenosyl 3-(methylsulfanyl)propylamine + putrescine = S-methyl-5'-thioadenosine + spermidine + H(+). It functions in the pathway amine and polyamine biosynthesis; spermidine biosynthesis; spermidine from putrescine: step 1/1. Catalyzes the irreversible transfer of a propylamine group from the amino donor S-adenosylmethioninamine (decarboxy-AdoMet) to putrescine (1,4-diaminobutane) to yield spermidine. The protein is Polyamine aminopropyltransferase of Pyrobaculum neutrophilum (strain DSM 2338 / JCM 9278 / NBRC 100436 / V24Sta) (Thermoproteus neutrophilus).